A 418-amino-acid polypeptide reads, in one-letter code: Thyroid hormone receptor alpha-A (418 aa).

The disordered stretch occupies residues M1 to S38. The modulating stretch occupies residues M1–P60. 2 consecutive NR C4-type zinc fingers follow at residues C61 to C81 and C99 to C123. A DNA-binding region (nuclear receptor) is located at residues C61 to D135. Residues E171–D415 form the NR LBD domain.

This sequence belongs to the nuclear hormone receptor family. NR1 subfamily. As to quaternary structure, binds to thyroid hormone receptor element (TRE) weakly as homodimers and monomers, but binds TRE with much higher affinity as heterodimers with retinoid X receptors. Can bind DNA as a heterodimer with either rxra or rxrg.

It is found in the nucleus. In terms of biological role, high affinity receptor for triiodothyronine (T3). The sequence is that of Thyroid hormone receptor alpha-A (thra-a) from Xenopus laevis (African clawed frog).